We begin with the raw amino-acid sequence, 394 residues long: Na(+)/H(+) antiporter NhaA (394 aa).

Transmembrane regions (helical) follow at residues 11 to 31 (LEAA…IFAN), 59 to 79 (LLMW…GMEV), 95 to 115 (IFPA…YWFI), 125 to 145 (GWAI…ALLS), 155 to 175 (FLLA…ALFF), 177 to 197 (HEMS…LVAM), 203 to 220 (TGLI…ASVL), 254 to 274 (ALAP…NAGV), 296 to 316 (LIIG…LLGI), 328 to 348 (IFAI…IAGL), and 365 to 385 (LGIL…LKIT).

It belongs to the NhaA Na(+)/H(+) (TC 2.A.33) antiporter family.

The protein localises to the cell inner membrane. The enzyme catalyses Na(+)(in) + 2 H(+)(out) = Na(+)(out) + 2 H(+)(in). In terms of biological role, na(+)/H(+) antiporter that extrudes sodium in exchange for external protons. In Actinobacillus pleuropneumoniae serotype 7 (strain AP76), this protein is Na(+)/H(+) antiporter NhaA.